The sequence spans 87 residues: Neurotoxin Cex1 (87 aa).

The signal sequence occupies residues 1 to 19; that stretch reads MNSLLMITTCLVLFGTVWA. The 66-residue stretch at 20–85 folds into the LCN-type CS-alpha/beta domain; it reads KEGYLVSKST…TYPIPGKSCG (66 aa). 4 cysteine pairs are disulfide-bonded: C31/C84, C35/C60, C44/C65, and C48/C67. Cysteine amide is present on C84. Residues 85 to 87 constitute a propeptide that is removed on maturation; that stretch reads GKK.

The protein belongs to the long (4 C-C) scorpion toxin superfamily. Sodium channel inhibitor family. Beta subfamily. As to expression, expressed by the venom gland.

Its subcellular location is the secreted. Its function is as follows. Beta toxins bind voltage-independently at site-4 of sodium channels (Nav) and shift the voltage of activation toward more negative potentials thereby affecting sodium channel activation and promoting spontaneous and repetitive firing. This Centruroides exilicauda (Bark scorpion) protein is Neurotoxin Cex1.